A 229-amino-acid polypeptide reads, in one-letter code: Large ribosomal subunit protein uL1 (229 aa).

The protein belongs to the universal ribosomal protein uL1 family. Part of the 50S ribosomal subunit.

In terms of biological role, binds directly to 23S rRNA. The L1 stalk is quite mobile in the ribosome, and is involved in E site tRNA release. Functionally, protein L1 is also a translational repressor protein, it controls the translation of the L11 operon by binding to its mRNA. The protein is Large ribosomal subunit protein uL1 of Staphylococcus aureus (strain MRSA252).